The following is a 161-amino-acid chain: MLQLKFIWPVARITPIYRPFTSHPFRNLATSSSISSTKAKTTKTDTTPLKLSNELYAIFKIHNRPYLVTEGDRVILPFKLKQAEVGDILNMTDVTTLGSRNYKLVGHPINTSLYTLKATVVGKTKRAFQTREVTKRRNRRVRHAKSKGDLTILRISELSMN.

Residues 1–35 (MLQLKFIWPVARITPIYRPFTSHPFRNLATSSSIS) constitute a mitochondrion transit peptide.

This sequence belongs to the bacterial ribosomal protein bL21 family. In terms of assembly, component of the mitochondrial large ribosomal subunit (mt-LSU). Mature yeast 74S mitochondrial ribosomes consist of a small (37S) and a large (54S) subunit. The 37S small subunit contains a 15S ribosomal RNA (15S mt-rRNA) and 34 different proteins. The 54S large subunit contains a 21S rRNA (21S mt-rRNA) and 46 different proteins.

It is found in the mitochondrion. In terms of biological role, component of the mitochondrial ribosome (mitoribosome), a dedicated translation machinery responsible for the synthesis of mitochondrial genome-encoded proteins, including at least some of the essential transmembrane subunits of the mitochondrial respiratory chain. The mitoribosomes are attached to the mitochondrial inner membrane and translation products are cotranslationally integrated into the membrane. This Saccharomyces cerevisiae (strain ATCC 204508 / S288c) (Baker's yeast) protein is Large ribosomal subunit protein bL21m (MRPL49).